The chain runs to 529 residues: Neuronal acetylcholine receptor subunit alpha-2 (529 aa).

The signal sequence occupies residues 1-26 (MGPSCPVFLSFTKLSLWWLLLTPAGG). The tract at residues 27–56 (EEAKRPPPRAPGDPLSSPSPTALPQGGSHT) is disordered. Topologically, residues 27 to 264 (EEAKRPPPRA…VTYAFIIRRL (238 aa)) are extracellular. N-linked (GlcNAc...) asparagine glycosylation is found at N79 and N129. The cysteines at positions 183 and 197 are disulfide-linked. The N-linked (GlcNAc...) asparagine glycan is linked to N235. Cysteines 247 and 248 form a disulfide. 3 helical membrane-spanning segments follow: residues 265 to 289 (PLFY…VFYL), 297 to 315 (ITLC…LLIT), and 331 to 352 (YLLF…VLNV). The Cytoplasmic portion of the chain corresponds to 353-502 (HHRSPSTHTM…WKYVAMVIDR (150 aa)). A helical membrane pass occupies residues 503 to 521 (IFLWLFIIVCFLGTIGLFL).

It belongs to the ligand-gated ion channel (TC 1.A.9) family. Acetylcholine receptor (TC 1.A.9.1) subfamily. Alpha-2/CHRNA2 sub-subfamily. In terms of assembly, neuronal AChR is composed of two different types of subunits: alpha and non-alpha (beta). CHRNA2/alpha-2 subunit can be combined to CHRNB2/beta-2 or CHRNB4/beta-4 to give rise to functional receptors. Both CHRNA2:CHRNB2 and CHRNA2:CHRNB4 nAChR complexes are heteropentamers with two subtypes: LS (low agonist sensitivity) with a (CHRNA2)3:(CHRNB2/4)2 and HS (high agonist sensitivity) with a (CHRNA2)2:(CHRNB2/4)3 stoichiometries; the subtypes differ in their subunit binding interfaces which are involved in ligand binding.

The protein localises to the synaptic cell membrane. It is found in the cell membrane. It catalyses the reaction Ca(2+)(in) = Ca(2+)(out). It carries out the reaction K(+)(in) = K(+)(out). The enzyme catalyses Na(+)(in) = Na(+)(out). Its function is as follows. Component of neuronal acetylcholine receptors (nAChRs) that function as pentameric, ligand-gated cation channels with high calcium permeability among other activities. nAChRs are excitatory neurotrasnmitter receptors formed by a collection of nAChR subunits known to mediate synaptic transmission in the nervous system and the neuromuscular junction. Each nAchR subunit confers differential attributes to channel properties, including activation, deactivation and desensitization kinetics, pH sensitivity, cation permeability, and binding to allosteric modulators. CHRNA2 forms heteropentameric neuronal acetylcholine receptors with CHRNB2 and CHRNB4 and plays a role in nicotine dependence. This Pan troglodytes (Chimpanzee) protein is Neuronal acetylcholine receptor subunit alpha-2 (CHRNA2).